The following is a 317-amino-acid chain: Transaldolase (317 aa).

The active-site Schiff-base intermediate with substrate is the Lys-126.

The protein belongs to the transaldolase family. Type 1 subfamily. As to quaternary structure, homodimer.

The protein localises to the cytoplasm. It catalyses the reaction D-sedoheptulose 7-phosphate + D-glyceraldehyde 3-phosphate = D-erythrose 4-phosphate + beta-D-fructose 6-phosphate. It participates in carbohydrate degradation; pentose phosphate pathway; D-glyceraldehyde 3-phosphate and beta-D-fructose 6-phosphate from D-ribose 5-phosphate and D-xylulose 5-phosphate (non-oxidative stage): step 2/3. Functionally, transaldolase is important for the balance of metabolites in the pentose-phosphate pathway. The chain is Transaldolase from Paraburkholderia xenovorans (strain LB400).